We begin with the raw amino-acid sequence, 103 residues long: MSVLERLAATVEARKGADPDSSWTAKLLARGPEKCAEKFGEEAVEAIIEAVRGDRARLASEAADVLYHLLVMLAARDVTLAEVMAELERREGTSGIAEKAGRG.

Belongs to the PRA-PH family.

The protein resides in the cytoplasm. It carries out the reaction 1-(5-phospho-beta-D-ribosyl)-ATP + H2O = 1-(5-phospho-beta-D-ribosyl)-5'-AMP + diphosphate + H(+). It functions in the pathway amino-acid biosynthesis; L-histidine biosynthesis; L-histidine from 5-phospho-alpha-D-ribose 1-diphosphate: step 2/9. The protein is Phosphoribosyl-ATP pyrophosphatase of Cereibacter sphaeroides (strain ATCC 17025 / ATH 2.4.3) (Rhodobacter sphaeroides).